A 222-amino-acid chain; its full sequence is Probable glutathione-independent glyoxalase hsp3104 (222 aa).

Residues C124, H125, and E155 contribute to the active site.

Belongs to the peptidase C56 family. HSP31-like subfamily.

Its subcellular location is the cytoplasm. The catalysed reaction is methylglyoxal + H2O = (R)-lactate + H(+). Its function is as follows. Catalyzes the conversion of methylglyoxal (MG) to D-lactate in a single glutathione (GSH)-independent step. May play a role in detoxifying endogenously produced glyoxals. Involved in protection against reactive oxygen species (ROS). The sequence is that of Probable glutathione-independent glyoxalase hsp3104 from Schizosaccharomyces pombe (strain 972 / ATCC 24843) (Fission yeast).